A 337-amino-acid chain; its full sequence is Terpene cyclase (337 aa).

Residues 5–25 (ASVIFLSLSVLAAVGVWGPFV) form a helical membrane-spanning segment. N-linked (GlcNAc...) asparagine glycosylation occurs at N65. The next 7 membrane-spanning stretches (helical) occupy residues 72-92 (IAYC…VILC), 111-131 (GLLS…MSFI), 149-169 (ALIL…LNVL), 177-197 (IWGI…ARII), 222-242 (VAGG…LGIF), 267-287 (LQVD…HELI), and 298-318 (LGGL…AAAW).

This sequence belongs to the membrane-bound ascI terpene cyclase family.

The protein localises to the membrane. Its pathway is antifungal biosynthesis. Its function is as follows. Cyclase; part of the gene cluster that mediates the biosynthesis of the tetrahydropyranyl antifungal agent lanomycin that acts as an inhibitor of CYP51 and blocks the ergosterol biosynthesis. The biosynthesis probably begins with the formation of an hexaketide, followed by methionine mediated alkylation of C-2 and C-6, and methylation of the reduced C-3 oxygen, pyran forming reductive ring closure, oxygenation of C-4, beta-keto reduction, enoyl reduction and dehydration of the remaining oxygens, and finally, acylation with glycine to complete the biosynthesis. This chain is Terpene cyclase, found in Pyrenophora dematioidea (Helminthosporium dematioideum).